A 580-amino-acid polypeptide reads, in one-letter code: Keratin, type II cytoskeletal 5 (580 aa).

Residues 1–161 (MSRQSSVSFR…DPTIQRVRTE (161 aa)) are head. Phosphoserine occurs at positions 5, 8, 16, and 21. The residue at position 24 (T24) is a Phosphothreonine; by CDK1. Phosphoserine occurs at positions 26, 36, 47, 61, 68, 72, 75, and 79. T145 is modified (phosphothreonine; by CDK1). T160 carries the post-translational modification Phosphothreonine; by AURKB. A coil 1A region spans residues 162–197 (EREQIKTLNNKFASFIDKVRFLEQQNKVLDTKWALL). Residues 162–475 (EREQIKTLNN…KLLEGEECRL (314 aa)) enclose the IF rod domain. The interval 198–216 (QEQGTKTIKQNLDPLFEQY) is linker 1. Residues 217–309 (INNLRRQLDG…FFDAELSQMQ (93 aa)) are coil 1B. The tract at residues 310–332 (THVSDTSVVLSMDNNRSLDLDSI) is linker 12. A coil 2 region spans residues 333–471 (IAEVKAQYED…ATYRKLLEGE (139 aa)). The tail stretch occupies residues 472-580 (ECRLSGEGVG…TSSSRRSFKS (109 aa)). At R526 the chain carries Omega-N-methylarginine. Residues 555-580 (FGSGGGSGSSVKFVSTTSSSRRSFKS) form a disordered region. The span at 563–580 (SSVKFVSTTSSSRRSFKS) shows a compositional bias: low complexity.

Belongs to the intermediate filament family. In terms of assembly, heterodimer of a type I and a type II keratin. Heterodimer with type I keratin KRT25 leading to the formation of keratin intermediate filament (KIF) network. Forms a heterodimer (via 2B domains) with KRT14 (via 2B domains). Interacts with PLEC isoform 1C, when in a heterodimer with KRT14. Interacts with TCHP. Interacts with EPPK1. Interacts with AMELX. Interacts with PKP1 (via N-terminus) and PKP2. Phosphorylated by CDK1, AURKB and Rho-kinase, phosphorylation is regulated by the cell cycle. Thr-24 phosphorylation, mediated by CDK1, peaks during prometaphase or metaphase cells with phosphorylated filamentous structures evident throughout the cytoplasm during early mitosis. CDK1 phosphorylates Thr-24 in mitotic cells at the site of injury. Post-translationally, O-glycosylated. As to expression, expressed in the corneal epithelium (at protein level). Expressed in the epidermis of the ear (at protein level). Expressed in the basal and spinous layers of the skin at birth (at protein level).

The protein resides in the cytoplasm. In terms of biological role, required for the formation of keratin intermediate filaments in the basal epidermis and maintenance of the skin barrier in response to mechanical stress. Regulates the recruitment of Langerhans cells to the epidermis, potentially by modulation of the abundance of macrophage chemotactic cytokines, macrophage inflammatory cytokines and CTNND1 localization in keratinocytes. The sequence is that of Keratin, type II cytoskeletal 5 from Mus musculus (Mouse).